A 259-amino-acid chain; its full sequence is Adenosylcobinamide-GDP ribazoletransferase (259 aa).

6 helical membrane-spanning segments follow: residues 9-29 (NLFF…WIEV), 43-63 (LVGL…LYWV), 64-84 (SPSI…GGFH), 118-138 (ALAL…LALF), 143-163 (VSLA…SFIF), and 190-210 (ILLA…ALVL).

This sequence belongs to the CobS family. Mg(2+) serves as cofactor.

The protein localises to the cell inner membrane. It carries out the reaction alpha-ribazole + adenosylcob(III)inamide-GDP = adenosylcob(III)alamin + GMP + H(+). It catalyses the reaction alpha-ribazole 5'-phosphate + adenosylcob(III)inamide-GDP = adenosylcob(III)alamin 5'-phosphate + GMP + H(+). It participates in cofactor biosynthesis; adenosylcobalamin biosynthesis; adenosylcobalamin from cob(II)yrinate a,c-diamide: step 7/7. Its function is as follows. Joins adenosylcobinamide-GDP and alpha-ribazole to generate adenosylcobalamin (Ado-cobalamin). Also synthesizes adenosylcobalamin 5'-phosphate from adenosylcobinamide-GDP and alpha-ribazole 5'-phosphate. This Shewanella pealeana (strain ATCC 700345 / ANG-SQ1) protein is Adenosylcobinamide-GDP ribazoletransferase.